A 457-amino-acid chain; its full sequence is Putative hexose transporter 12 (457 aa).

Residues 1–2 (MG) are Cytoplasmic-facing. Residues 3-23 (LIVSIFNIGCAIGGIVLSKVG) form a helical membrane-spanning segment. Residues 24–29 (DIYGRR) lie on the Extracellular side of the membrane. The chain crosses the membrane as a helical span at residues 30 to 50 (IGLITVTAIYVVGILIQITSI). Residues 51–60 (NKWYQYFIGR) lie on the Cytoplasmic side of the membrane. Residues 61-81 (IISGIGVGGIAVLSPMLISEV) traverse the membrane as a helical segment. The Extracellular portion of the chain corresponds to 82–87 (APKHIR). Residues 88-108 (GTLVQLYQLMGTMGIFLGYCT) form a helical membrane-spanning segment. The Cytoplasmic segment spans residues 109–122 (NYGTKNYHNATQWR). Residues 123-143 (VGLGLCFAWATFMVSGMMFVP) traverse the membrane as a helical segment. The Extracellular portion of the chain corresponds to 144 to 247 (ESPRYLIEVG…KSVGLKDSFQ (104 aa)). The N-linked (GlcNAc...) asparagine glycan is linked to asparagine 194. The chain crosses the membrane as a helical span at residues 248–268 (TSIIIGVVNFFSSFIAVYTIE). At 269–274 (RFGRRT) the chain is on the cytoplasmic side. The helical transmembrane segment at 275–295 (CLLWGAASMLCCFAVFASVGV) threads the bilayer. The Extracellular segment spans residues 296-319 (TKLWPQGSSHQDITSQGAGNCMIV). The helical transmembrane segment at 320-340 (FTMFFIFSFATTWAGGCFVIV) threads the bilayer. Residues 341–353 (SETFPLRAKSRGM) lie on the Cytoplasmic side of the membrane. Residues 354-374 (AIATAANWMWGFLISFFTPFI) form a helical membrane-spanning segment. At 375–379 (TGAIN) the chain is on the extracellular side. A helical transmembrane segment spans residues 380–400 (FYYGYVFLGCLVFAYFYVFFF). Topologically, residues 401–457 (VPETKGLTLEEVNTMWLEGVPAWKSASWVPPERRTADYDADAIDHDNRPIYKRFFSS) are cytoplasmic.

The protein belongs to the major facilitator superfamily. Sugar transporter (TC 2.A.1.1) family.

It is found in the membrane. In terms of biological role, probable glucose transporter. The sequence is that of Putative hexose transporter 12 (HXT12) from Saccharomyces cerevisiae (strain ATCC 204508 / S288c) (Baker's yeast).